A 264-amino-acid polypeptide reads, in one-letter code: Acyl-[acyl-carrier-protein]--UDP-N-acetylglucosamine O-acyltransferase (264 aa).

The protein belongs to the transferase hexapeptide repeat family. LpxA subfamily. In terms of assembly, homotrimer.

The protein localises to the cytoplasm. The catalysed reaction is a (3R)-hydroxyacyl-[ACP] + UDP-N-acetyl-alpha-D-glucosamine = a UDP-3-O-[(3R)-3-hydroxyacyl]-N-acetyl-alpha-D-glucosamine + holo-[ACP]. The protein operates within glycolipid biosynthesis; lipid IV(A) biosynthesis; lipid IV(A) from (3R)-3-hydroxytetradecanoyl-[acyl-carrier-protein] and UDP-N-acetyl-alpha-D-glucosamine: step 1/6. Its function is as follows. Involved in the biosynthesis of lipid A, a phosphorylated glycolipid that anchors the lipopolysaccharide to the outer membrane of the cell. The chain is Acyl-[acyl-carrier-protein]--UDP-N-acetylglucosamine O-acyltransferase from Rickettsia africae (strain ESF-5).